The primary structure comprises 334 residues: Beta-ketoacyl-[acyl-carrier-protein] synthase III (334 aa).

Residues Cys114 and His253 contribute to the active site. An ACP-binding region spans residues 254–258 (QANIR). The active site involves Asn283.

This sequence belongs to the thiolase-like superfamily. FabH family. In terms of assembly, homodimer.

It is found in the cytoplasm. It catalyses the reaction malonyl-[ACP] + acetyl-CoA + H(+) = 3-oxobutanoyl-[ACP] + CO2 + CoA. It functions in the pathway lipid metabolism; fatty acid biosynthesis. In terms of biological role, catalyzes the condensation reaction of fatty acid synthesis by the addition to an acyl acceptor of two carbons from malonyl-ACP. Catalyzes the first condensation reaction which initiates fatty acid synthesis and may therefore play a role in governing the total rate of fatty acid production. Possesses both acetoacetyl-ACP synthase and acetyl transacylase activities. Its substrate specificity determines the biosynthesis of branched-chain and/or straight-chain of fatty acids. The polypeptide is Beta-ketoacyl-[acyl-carrier-protein] synthase III (Campylobacter concisus (strain 13826)).